We begin with the raw amino-acid sequence, 1030 residues long: Calcium-transporting ATPase 4, plasma membrane-type (1030 aa).

The Cytoplasmic portion of the chain corresponds to Met-1–Ser-157. Residues Ala-19–Val-30 form an interaction with calmodulin region. Ser-28 carries the phosphoserine modification. Residues Phe-158–Ala-178 traverse the membrane as a helical segment. Residues Val-179–Tyr-196 are Lumenal-facing. A helical transmembrane segment spans residues Asp-197–Tyr-217. At Lys-218 to Leu-345 the chain is on the cytoplasmic side. The chain crosses the membrane as a helical span at residues Asn-346–Val-365. At Val-366 to Tyr-395 the chain is on the lumenal side. Residues Phe-396–Leu-413 form a helical membrane-spanning segment. Topologically, residues Ala-414–Ile-804 are cytoplasmic. Asp-451 acts as the 4-aspartylphosphate intermediate in catalysis. 2 residues coordinate Mg(2+): Asp-749 and Asp-753. Residues Gln-805–Phe-823 traverse the membrane as a helical segment. The Lumenal portion of the chain corresponds to Val-824 to Leu-834. The chain crosses the membrane as a helical span at residues Thr-835–Ala-855. Topologically, residues Thr-856 to Phe-875 are cytoplasmic. Residues Ile-876–Leu-898 form a helical membrane-spanning segment. Over Asn-899–Gly-910 the chain is Lumenal. A helical transmembrane segment spans residues Pro-911–Asn-932. Topologically, residues Glu-933–Asn-950 are cytoplasmic. A helical membrane pass occupies residues Ser-951–Leu-972. The Lumenal portion of the chain corresponds to Gly-973 to Ser-982. A helical membrane pass occupies residues Trp-983 to Lys-1004. Over Cys-1005 to Ala-1030 the chain is Cytoplasmic.

Belongs to the cation transport ATPase (P-type) (TC 3.A.3) family. Type IIB subfamily.

It is found in the vacuole membrane. It carries out the reaction Ca(2+)(in) + ATP + H2O = Ca(2+)(out) + ADP + phosphate + H(+). With respect to regulation, activated by calmodulin. Its function is as follows. This magnesium-dependent enzyme catalyzes the hydrolysis of ATP coupled with the translocation of calcium from the cytosol into small vacuoles. This is Calcium-transporting ATPase 4, plasma membrane-type (ACA4) from Arabidopsis thaliana (Mouse-ear cress).